Reading from the N-terminus, the 82-residue chain is Cytochrome b559 subunit alpha (82 aa).

A helical transmembrane segment spans residues 21-35; sequence VIHSITIPSLFIAGW. His23 lines the heme pocket.

This sequence belongs to the PsbE/PsbF family. As to quaternary structure, heterodimer of an alpha subunit and a beta subunit. PSII is composed of 1 copy each of membrane proteins PsbA, PsbB, PsbC, PsbD, PsbE, PsbF, PsbH, PsbI, PsbJ, PsbK, PsbL, PsbM, PsbT, PsbX, PsbY, PsbZ, Psb30/Ycf12, at least 3 peripheral proteins of the oxygen-evolving complex and a large number of cofactors. It forms dimeric complexes. The cofactor is heme b.

It localises to the plastid. It is found in the chloroplast thylakoid membrane. Its function is as follows. This b-type cytochrome is tightly associated with the reaction center of photosystem II (PSII). PSII is a light-driven water:plastoquinone oxidoreductase that uses light energy to abstract electrons from H(2)O, generating O(2) and a proton gradient subsequently used for ATP formation. It consists of a core antenna complex that captures photons, and an electron transfer chain that converts photonic excitation into a charge separation. In Stigeoclonium helveticum (Green alga), this protein is Cytochrome b559 subunit alpha.